The chain runs to 238 residues: Ribosomal RNA small subunit methyltransferase G (238 aa).

Residues G78, F83, 129-130 (AE), and R148 each bind S-adenosyl-L-methionine. The tract at residues 217-238 (KKKETPKKYPRKAGTPAKSPIK) is disordered.

This sequence belongs to the methyltransferase superfamily. RNA methyltransferase RsmG family.

It is found in the cytoplasm. In terms of biological role, specifically methylates the N7 position of a guanine in 16S rRNA. The sequence is that of Ribosomal RNA small subunit methyltransferase G from Lactococcus lactis subsp. cremoris (strain SK11).